The primary structure comprises 328 residues: Phosphate acyltransferase (328 aa).

It belongs to the PlsX family. As to quaternary structure, homodimer. Probably interacts with PlsY.

Its subcellular location is the cytoplasm. The catalysed reaction is a fatty acyl-[ACP] + phosphate = an acyl phosphate + holo-[ACP]. It functions in the pathway lipid metabolism; phospholipid metabolism. In terms of biological role, catalyzes the reversible formation of acyl-phosphate (acyl-PO(4)) from acyl-[acyl-carrier-protein] (acyl-ACP). This enzyme utilizes acyl-ACP as fatty acyl donor, but not acyl-CoA. In Staphylococcus aureus (strain MSSA476), this protein is Phosphate acyltransferase.